The primary structure comprises 101 residues: NAD(P)H-quinone oxidoreductase subunit 4L, chloroplastic (101 aa).

Transmembrane regions (helical) follow at residues 2–22 (MFEHVLFLSAYLFSIGIYGLI), 32–52 (MCLELILNSVNINLVTFSDLF), and 61–81 (IFSIFVIAIAAAEAAIGLAIV).

It belongs to the complex I subunit 4L family. In terms of assembly, NDH is composed of at least 16 different subunits, 5 of which are encoded in the nucleus.

Its subcellular location is the plastid. The protein resides in the chloroplast thylakoid membrane. It carries out the reaction a plastoquinone + NADH + (n+1) H(+)(in) = a plastoquinol + NAD(+) + n H(+)(out). It catalyses the reaction a plastoquinone + NADPH + (n+1) H(+)(in) = a plastoquinol + NADP(+) + n H(+)(out). Functionally, NDH shuttles electrons from NAD(P)H:plastoquinone, via FMN and iron-sulfur (Fe-S) centers, to quinones in the photosynthetic chain and possibly in a chloroplast respiratory chain. The immediate electron acceptor for the enzyme in this species is believed to be plastoquinone. Couples the redox reaction to proton translocation, and thus conserves the redox energy in a proton gradient. The polypeptide is NAD(P)H-quinone oxidoreductase subunit 4L, chloroplastic (Lemna minor (Common duckweed)).